We begin with the raw amino-acid sequence, 382 residues long: Gap junction alpha-1 protein (382 aa).

Over 2 to 23 the chain is Cytoplasmic; sequence GDWSALGKLLDKVQAYSTAGGK. At Ser-5 the chain carries Phosphoserine. A helical membrane pass occupies residues 24–44; that stretch reads VWLSVLFIFRILLLGTAVESA. Over 45 to 76 the chain is Extracellular; the sequence is WGDEQSAFRCNTQQPGCENVCYDKSFPISHVR. Intrachain disulfides connect Cys-54-Cys-192 and Cys-187-Cys-198. The chain crosses the membrane as a helical span at residues 77–97; it reads FWVLQIIFVSVPTLLYLAHVF. Residues 98-155 are Cytoplasmic-facing; sequence YVMRKEEKLNKKEEELKVAQTDGVNVEMHLKQIEIKKFKYGIEEHGKVKMRGGLLRTY. Lys-144 is covalently cross-linked (Glycyl lysine isopeptide (Lys-Gly) (interchain with G-Cter in SUMO)). A helical transmembrane segment spans residues 156-176; the sequence is IISILFKSVFEVAFLLIQWYI. The Extracellular segment spans residues 177–207; sequence YGFSLSAVYTCKRDPCPHQVDCFLSRPTEKT. The helical transmembrane segment at 208-228 threads the bilayer; sequence IFIIFMLVVSLVSLALNIIEL. The Cytoplasmic portion of the chain corresponds to 229–382; that stretch reads FYVFFKGVKD…SRPRPDDLEI (154 aa). Lys-237 participates in a covalent cross-link: Glycyl lysine isopeptide (Lys-Gly) (interchain with G-Cter in SUMO). The tract at residues 244–382 is interaction with NOV; that stretch reads SDPYHATTGP…SRPRPDDLEI (139 aa). Tyr-247 bears the Phosphotyrosine mark. Phosphoserine is present on residues Ser-255, Ser-257, and Ser-262. The segment at 264 to 382 is interaction with UBQLN4; it reads KYAYFNGCSS…SRPRPDDLEI (119 aa). An S-nitrosocysteine modification is found at Cys-271. The residue at position 275 (Thr-275) is a Phosphothreonine. Ser-306 and Ser-314 each carry phosphoserine. A compositionally biased stretch (polar residues) spans 317-332; the sequence is QNRMGQAGSTISNSHA. The disordered stretch occupies residues 317–382; it reads QNRMGQAGST…SRPRPDDLEI (66 aa). Ser-325 carries the post-translational modification Phosphoserine; by CK1. The residue at position 326 (Thr-326) is a Phosphothreonine. Phosphoserine; by CK1 occurs at positions 328 and 330. Phosphoserine occurs at positions 344 and 365. The span at 362–374 shows a compositional bias: low complexity; it reads RPSSRASSRASSR. A Phosphoserine; by PKC/PRKCG and PKC/PRKCD modification is found at Ser-368. Phosphoserine occurs at positions 369 and 373.

The protein belongs to the connexin family. Alpha-type (group II) subfamily. In terms of assembly, a connexon is composed of a hexamer of connexins. Interacts with SGSM3. Interacts with RIC1/CIP150. Interacts with CNST and CSNK1D. Interacts (via C-terminus) with TJP1. Interacts (via C-terminus) with SRC (via SH3 domain). Interacts (not ubiquitinated) with UBQLN4 (via UBA domain). Interacts with NOV. Interacts with TMEM65. Interacts with ANK3/ANKG and PKP2. Phosphorylation at Ser-325, Ser-328 and Ser-330 by CK1 modulates gap junction assembly. Phosphorylated at Ser-368 by PRKCG; phosphorylation induces disassembly of gap junction plaques and inhibition of gap junction activity. Phosphorylation at Ser-368 by PRKCD triggers its internalization into small vesicles leading to proteasome-mediated degradation. Post-translationally, sumoylated with SUMO1, SUMO2 and SUMO3, which may regulate the level of functional Cx43 gap junctions at the plasma membrane. May be desumoylated by SENP1 or SENP2. In terms of processing, S-nitrosylation at Cys-271 is enriched at the muscle endothelial gap junction in arteries, it augments channel permeability and may regulate of smooth muscle cell to endothelial cell communication. Acetylated in the developing cortex; leading to delocalization from the cell membrane.

It localises to the cell membrane. Its subcellular location is the cell junction. The protein resides in the gap junction. The protein localises to the endoplasmic reticulum. Gap junction protein that acts as a regulator of bladder capacity. A gap junction consists of a cluster of closely packed pairs of transmembrane channels, the connexons, through which materials of low MW diffuse from one cell to a neighboring cell. May play a critical role in the physiology of hearing by participating in the recycling of potassium to the cochlear endolymph. Negative regulator of bladder functional capacity: acts by enhancing intercellular electrical and chemical transmission, thus sensitizing bladder muscles to cholinergic neural stimuli and causing them to contract. May play a role in cell growth inhibition through the regulation of NOV expression and localization. Plays an essential role in gap junction communication in the ventricles. In Oryctolagus cuniculus (Rabbit), this protein is Gap junction alpha-1 protein (GJA1).